A 324-amino-acid polypeptide reads, in one-letter code: 4-hydroxy-3-methylbut-2-enyl diphosphate reductase (324 aa).

Residue C13 coordinates [4Fe-4S] cluster. (2E)-4-hydroxy-3-methylbut-2-enyl diphosphate is bound by residues H41 and H75. Dimethylallyl diphosphate contacts are provided by H41 and H75. Residues H41 and H75 each coordinate isopentenyl diphosphate. C97 lines the [4Fe-4S] cluster pocket. Residue H125 coordinates (2E)-4-hydroxy-3-methylbut-2-enyl diphosphate. H125 lines the dimethylallyl diphosphate pocket. H125 contacts isopentenyl diphosphate. The active-site Proton donor is the E127. (2E)-4-hydroxy-3-methylbut-2-enyl diphosphate is bound at residue T168. Residue C225 coordinates [4Fe-4S] cluster. Residues S253, S254, N255, and S302 each contribute to the (2E)-4-hydroxy-3-methylbut-2-enyl diphosphate site. The dimethylallyl diphosphate site is built by S253, S254, N255, and S302. Positions 253, 254, 255, and 302 each coordinate isopentenyl diphosphate.

The protein belongs to the IspH family. [4Fe-4S] cluster serves as cofactor.

The catalysed reaction is isopentenyl diphosphate + 2 oxidized [2Fe-2S]-[ferredoxin] + H2O = (2E)-4-hydroxy-3-methylbut-2-enyl diphosphate + 2 reduced [2Fe-2S]-[ferredoxin] + 2 H(+). It catalyses the reaction dimethylallyl diphosphate + 2 oxidized [2Fe-2S]-[ferredoxin] + H2O = (2E)-4-hydroxy-3-methylbut-2-enyl diphosphate + 2 reduced [2Fe-2S]-[ferredoxin] + 2 H(+). Its pathway is isoprenoid biosynthesis; dimethylallyl diphosphate biosynthesis; dimethylallyl diphosphate from (2E)-4-hydroxy-3-methylbutenyl diphosphate: step 1/1. It participates in isoprenoid biosynthesis; isopentenyl diphosphate biosynthesis via DXP pathway; isopentenyl diphosphate from 1-deoxy-D-xylulose 5-phosphate: step 6/6. Catalyzes the conversion of 1-hydroxy-2-methyl-2-(E)-butenyl 4-diphosphate (HMBPP) into a mixture of isopentenyl diphosphate (IPP) and dimethylallyl diphosphate (DMAPP). Acts in the terminal step of the DOXP/MEP pathway for isoprenoid precursor biosynthesis. The sequence is that of 4-hydroxy-3-methylbut-2-enyl diphosphate reductase from Chlorobium limicola (strain DSM 245 / NBRC 103803 / 6330).